Reading from the N-terminus, the 432-residue chain is MSKIVKVIGREIIDSRGNPTVEAEVHLEGGFVGMAAAPSGASTGSREALELRDGDKSRFLGKGVTKAVAAVNGPIAQAILGKDAKDQAGIDKIMIDLDGTENKSNFGANAILAVSLANAKAAAASKGLPLYAHIAELNGTPGKYSMPVPMMNIINGGEHADNNVDIQEFMIQPVGAPTLKEAVRMGSEVFHHLAKVLKSKGMNTAVGDEGGYAPNLGSNAEALAVIAEAVKAAGYELGKDITLAMDCAASEFYKDGKYVLAGEGNKAFTSEEFTHFLEDLTKQYPIVSIEDGLDESDWDGFAYQTKVLGDKIQLVGDDLFVTNTKILKEGIEKGIANSILIKFNQIGSLTETLAAIKMAKDAGYTAVISHRSGETEDATIADLAVGTAAGQIKTGSMSRSDRVAKYNQLIRIEEALGEQAPFNGRKEIKGQA.

Residue Gln167 participates in (2R)-2-phosphoglycerate binding. The active-site Proton donor is the Glu209. Mg(2+)-binding residues include Asp246, Glu290, and Asp317. (2R)-2-phosphoglycerate-binding residues include Lys342, Arg371, Ser372, and Lys393. The Proton acceptor role is filled by Lys342.

The protein belongs to the enolase family. Component of the RNA degradosome, a multiprotein complex involved in RNA processing and mRNA degradation. Requires Mg(2+) as cofactor.

It is found in the cytoplasm. The protein localises to the secreted. It localises to the cell surface. The enzyme catalyses (2R)-2-phosphoglycerate = phosphoenolpyruvate + H2O. It functions in the pathway carbohydrate degradation; glycolysis; pyruvate from D-glyceraldehyde 3-phosphate: step 4/5. Catalyzes the reversible conversion of 2-phosphoglycerate (2-PG) into phosphoenolpyruvate (PEP). It is essential for the degradation of carbohydrates via glycolysis. This chain is Enolase, found in Klebsiella pneumoniae (strain 342).